The primary structure comprises 297 residues: UDP-N-acetylenolpyruvoylglucosamine reductase (297 aa).

The FAD-binding PCMH-type domain maps to 18-184 (QVGGPAEWYL…LSARLRLAPG (167 aa)). Residue R163 is part of the active site. S214 functions as the Proton donor in the catalytic mechanism. Residue E285 is part of the active site.

Requires FAD as cofactor.

It localises to the cytoplasm. The catalysed reaction is UDP-N-acetyl-alpha-D-muramate + NADP(+) = UDP-N-acetyl-3-O-(1-carboxyvinyl)-alpha-D-glucosamine + NADPH + H(+). It participates in cell wall biogenesis; peptidoglycan biosynthesis. Its function is as follows. Cell wall formation. The protein is UDP-N-acetylenolpyruvoylglucosamine reductase of Gloeobacter violaceus (strain ATCC 29082 / PCC 7421).